A 412-amino-acid chain; its full sequence is BSD domain-containing protein 1 (412 aa).

Positions 146-198 (WLAYWDPEHRKAEISELLVTSPSIRALYTKMVPAAVSHSEFWQRYFYKVHQLE) constitute a BSD domain. Basic and acidic residues-rich tracts occupy residues 208–219 (KQRADQSVHSEE) and 255–271 (HVED…RDHT). Disordered stretches follow at residues 208 to 228 (KQRA…EEED) and 255 to 383 (HVED…EKDF). Low complexity predominate over residues 272–287 (SITSPSESSESISPIT). Over residues 340–351 (THREDPPSDLRV) the composition is skewed to basic and acidic residues. The span at 355–374 (NSDSGKSTPSNNGQKGSSTD) shows a compositional bias: polar residues.

The sequence is that of BSD domain-containing protein 1 (bsdc1) from Xenopus tropicalis (Western clawed frog).